We begin with the raw amino-acid sequence, 311 residues long: Cadmium, cobalt and zinc/H(+)-K(+) antiporter (311 aa).

The Extracellular portion of the chain corresponds to 1-12; it reads MGHNHNEGANKK. A helical transmembrane segment spans residues 13–33; it reads VLLISFIMITGYMIIEAIGGF. Residues 34 to 43 lie on the Cytoplasmic side of the membrane; it reads LTNSLALLSD. The chain crosses the membrane as a helical span at residues 44-64; sequence AGHMLSDSISLMVALIAFTLA. Residues 65–78 are Extracellular-facing; sequence EKKANHNKTFGYKR. Residues 79–99 traverse the membrane as a helical segment; sequence FEILAAVINGAALILISLYII. The Cytoplasmic segment spans residues 100–115; the sequence is YEAIERFSNPPKVATT. A helical transmembrane segment spans residues 116–136; that stretch reads GMLTISIIGLVVNLLVAWIMM. Over 137–157 the chain is Extracellular; that stretch reads SGGDTKNNLNIRGAYLHVISD. The chain crosses the membrane as a helical span at residues 158–178; sequence MLGSVGAILAAILIIFFGWGW. Over 179 to 311 the chain is Cytoplasmic; sequence ADPLASIIVA…MEKQRDHHHH (133 aa).

This sequence belongs to the cation diffusion facilitator (CDF) transporter (TC 2.A.4) family. SLC30A subfamily.

It is found in the cell membrane. In terms of biological role, involved in divalent cation and potassium homeostasis in the cell. Catalyzes the active efflux of zinc, cadmium and cobalt, in exchange for potassium and H(+) ions. The chain is Cadmium, cobalt and zinc/H(+)-K(+) antiporter (czcD) from Bacillus subtilis (strain 168).